The chain runs to 131 residues: Translation initiation factor 5A (131 aa).

Lysine 36 carries the hypusine modification.

The protein belongs to the eIF-5A family.

The protein resides in the cytoplasm. Functions by promoting the formation of the first peptide bond. The sequence is that of Translation initiation factor 5A (eIF5A) from Saccharolobus islandicus (strain Y.N.15.51 / Yellowstone #2) (Sulfolobus islandicus).